Reading from the N-terminus, the 526-residue chain is MTVSKLLKERVRYAPYLAKVKTPEELIPLFKNGQYLGWSGFTGVGTPKAVPDALIKHVEDNNLQGKLRFNLFVGASAGPEENKWAEHDMIIRRAPHQVGKPIAKAINNGKIQFFDKHLSMFPQDLTYGYYTRDRTDGKILDYMIIEATAIKEDGSIVPGPSVGGSPEFISVSDKVIIEVNTATPSFEGVHDIDMPVNPPHRVPYPYTKVDQKIGVDSIPVDPERVIAIVESKTRDQVGPNTPSDDMSKAIAGNLIEFFRNEVKHGRLPENLLPLQSGIGNIANAVIEGLTDANFKHLNVWTEVLQDSFLDLFENGSLDYATATSIRLTEPGFERVFKNWDFYKSRLCLRSQVVSNNPELIRRLGVIAMNTPVEADIYAHANSTNVNGSRMLNGLGGSADFLRNAKLSIMHCPAARPTKVDPTGISSIVPMVSHVDQTEHDLDVLVTDQGLADLRGLSPRERAREIINKCAHPDYKPLLQDYLDRAEHYATKHGCLHEPHMLKNAFKFHTNLAEKGTMKVESWDPVE.

277–281 contributes to the CoA binding site; that stretch reads GIGNI. The active-site 5-glutamyl coenzyme A thioester intermediate is Glu-302. CoA is bound by residues Asn-392 and Gly-396.

Belongs to the acetyl-CoA hydrolase/transferase family.

It localises to the cytoplasm. The enzyme catalyses acetyl-CoA + H2O = acetate + CoA + H(+). Its function is as follows. Presumably involved in regulating the intracellular acetyl-CoA pool for fatty acid and cholesterol synthesis and fatty acid oxidation. The polypeptide is Acetyl-CoA hydrolase (ACH1) (Candida glabrata (strain ATCC 2001 / BCRC 20586 / JCM 3761 / NBRC 0622 / NRRL Y-65 / CBS 138) (Yeast)).